Consider the following 334-residue polypeptide: Protein-methionine-sulfoxide reductase catalytic subunit MsrP (334 aa).

The segment at residues 1-44 (MKKNQFLKESDVTAESVFFMKRRQVLKALGISATALSLPHAAHA) is a signal peptide (tat-type signal). Mo-molybdopterin-binding positions include N88, 91 to 92 (YE), C146, T181, N233, R238, and 249 to 251 (GIK).

It belongs to the MsrP family. In terms of assembly, heterodimer of a catalytic subunit (MsrP) and a heme-binding subunit (MsrQ). Mo-molybdopterin is required as a cofactor. Post-translationally, exported by the Tat system. Can also be exported by the Sec system.

It localises to the periplasm. The enzyme catalyses L-methionyl-[protein] + a quinone + H2O = L-methionyl-(S)-S-oxide-[protein] + a quinol. The catalysed reaction is L-methionyl-[protein] + a quinone + H2O = L-methionyl-(R)-S-oxide-[protein] + a quinol. Part of the MsrPQ system that repairs oxidized periplasmic proteins containing methionine sulfoxide residues (Met-O), using respiratory chain electrons. Thus protects these proteins from oxidative-stress damage caused by reactive species of oxygen and chlorine. MsrPQ is essential for the maintenance of envelope integrity under bleach stress, rescuing a wide series of structurally unrelated periplasmic proteins from methionine oxidation, including the primary periplasmic chaperone SurA and the lipoprotein Pal. The catalytic subunit MsrP is non-stereospecific, being able to reduce both (R-) and (S-) diastereoisomers of methionine sulfoxide. Can catalyze the reduction of a variety of substrates in vitro, including dimethyl sulfoxide, trimethylamine N-oxide, phenylmethyl sulfoxide and L-methionine sulfoxide. Cannot reduce cyclic N-oxides. Shows no activity as sulfite oxidase. This Escherichia coli (strain K12) protein is Protein-methionine-sulfoxide reductase catalytic subunit MsrP.